The primary structure comprises 129 residues: Histone H2A-III (129 aa).

Residues 1–22 (MSGRGKQGGKARAKAKSRSSRA) are disordered. At serine 2 the chain carries N-acetylserine. Serine 2 carries the phosphoserine modification. Lysine 6 bears the N6-(2-hydroxyisobutyryl)lysine mark. An N6-acetyllysine mark is found at lysine 6 and lysine 10. The span at 7–19 (QGGKARAKAKSRS) shows a compositional bias: basic residues. Lysine 10 carries the post-translational modification N6-(2-hydroxyisobutyryl)lysine; alternate. Lysine 10 carries the post-translational modification N6-lactoyllysine; alternate. Residue lysine 10 is modified to N6-succinyllysine. Residues lysine 14 and lysine 16 each participate in a glycyl lysine isopeptide (Lys-Gly) (interchain with G-Cter in ubiquitin) cross-link. An N6-(2-hydroxyisobutyryl)lysine; alternate modification is found at lysine 37. Lysine 75 and lysine 76 each carry N6-(2-hydroxyisobutyryl)lysine. An N6-(2-hydroxyisobutyryl)lysine; alternate modification is found at lysine 96. Lysine 96 carries the post-translational modification N6-succinyllysine. Lysine 96 is subject to N6-glutaryllysine; alternate. At lysine 100 the chain carries N6-glutaryllysine. Glutamine 105 carries the N5-methylglutamine modification. Residue lysine 119 is modified to N6-(2-hydroxyisobutyryl)lysine; alternate. N6-glutaryllysine; alternate is present on residues lysine 119 and lysine 120. Residue lysine 120 forms a Glycyl lysine isopeptide (Lys-Gly) (interchain with G-Cter in ubiquitin) linkage.

The protein belongs to the histone H2A family. In terms of assembly, the nucleosome is a histone octamer containing two molecules each of H2A, H2B, H3 and H4 assembled in one H3-H4 heterotetramer and two H2A-H2B heterodimers. The octamer wraps approximately 147 bp of DNA. In terms of processing, monoubiquitination of Lys-120 (H2AK119Ub) gives a specific tag for epigenetic transcriptional repression. Following DNA double-strand breaks (DSBs), it is ubiquitinated through 'Lys-63' linkage of ubiquitin moieties, leading to the recruitment of repair proteins to sites of DNA damage. H2AK119Ub and ionizing radiation-induced 'Lys-63'-linked ubiquitination are distinct events. Phosphorylation on Ser-2 is enhanced during mitosis. Phosphorylation on Ser-2 directly represses transcription. Post-translationally, glutamine methylation at Gln-105 (H2AQ104me) by FBL is specifically dedicated to polymerase I. It is present at 35S ribosomal DNA locus and impairs binding of the FACT complex.

It localises to the nucleus. Its subcellular location is the chromosome. Its function is as follows. Core component of nucleosome. Nucleosomes wrap and compact DNA into chromatin, limiting DNA accessibility to the cellular machineries which require DNA as a template. Histones thereby play a central role in transcription regulation, DNA repair, DNA replication and chromosomal stability. DNA accessibility is regulated via a complex set of post-translational modifications of histones, also called histone code, and nucleosome remodeling. This Gallus gallus (Chicken) protein is Histone H2A-III.